The following is a 498-amino-acid chain: Glycerol kinase (498 aa).

T12 is a binding site for ADP. Positions 12, 13, and 14 each coordinate ATP. Residue T12 coordinates sn-glycerol 3-phosphate. R16 is a binding site for ADP. R82, E83, Y134, and D244 together coordinate sn-glycerol 3-phosphate. Glycerol is bound by residues R82, E83, Y134, D244, and Q245. Positions 266 and 310 each coordinate ADP. ATP-binding residues include T266, G310, Q314, and G411. G411 and N415 together coordinate ADP.

Belongs to the FGGY kinase family.

The enzyme catalyses glycerol + ATP = sn-glycerol 3-phosphate + ADP + H(+). The protein operates within polyol metabolism; glycerol degradation via glycerol kinase pathway; sn-glycerol 3-phosphate from glycerol: step 1/1. Its activity is regulated as follows. Inhibited by fructose 1,6-bisphosphate (FBP). Its function is as follows. Key enzyme in the regulation of glycerol uptake and metabolism. Catalyzes the phosphorylation of glycerol to yield sn-glycerol 3-phosphate. The polypeptide is Glycerol kinase (Chloroflexus aggregans (strain MD-66 / DSM 9485)).